The primary structure comprises 230 residues: Androgen-dependent TFPI-regulating protein (230 aa).

Topologically, residues 1–3 (MTK) are cytoplasmic. The helical transmembrane segment at 4–24 (TSTCIYHFLVLSWYTFLNYYI) threads the bilayer. Residues 25–46 (SQEGKDEVKPKILANGARWKYM) lie on the Extracellular side of the membrane. The helical transmembrane segment at 47–67 (TLLNLLLQTIFYGVTCLDDVL) threads the bilayer. Over 68–85 (KRTKGGKDIKFLTAFRDL) the chain is Cytoplasmic. Residues 86–106 (LFTTLAFPVSTFVFLAFWILF) form a helical membrane-spanning segment. The Extracellular portion of the chain corresponds to 107 to 119 (LYNRDLIYPKVLD). Residues 120–140 (TVIPVWLNHAMHTFIFPITLA) form a helical membrane-spanning segment. Residues 141 to 154 (EVVLRPHSYPSKKT) are Cytoplasmic-facing. A helical membrane pass occupies residues 155–175 (GLTLLAAASIAYISRILWLYF). The Extracellular segment spans residues 176–189 (ETGTWVYPVFAKLS). A helical membrane pass occupies residues 190-210 (LLGLAAFFSLSYVFIASIYLL). The Cytoplasmic segment spans residues 211 to 230 (GEKLNHWKWGDMRQPRKKRK).

Belongs to the AIG1 family. In terms of tissue distribution, expressed in cultured endothelial cells and in placenta.

The protein resides in the cell membrane. It carries out the reaction 9-hexadecanoyloxy-octadecanoate + H2O = 9-hydroxy-octadecanoate + hexadecanoate + H(+). The catalysed reaction is 12-hexadecanoyloxy-octadecanoate + H2O = 12-hydroxyoctadecanoate + hexadecanoate + H(+). It catalyses the reaction 9-(9Z-hexadecenoyloxy)-octadecanoate + H2O = (9Z)-hexadecenoate + 9-hydroxy-octadecanoate + H(+). The enzyme catalyses 12-(9Z-hexadecenoyloxy)-octadecanoate + H2O = 12-hydroxyoctadecanoate + (9Z)-hexadecenoate + H(+). It carries out the reaction 13-(9Z-hexadecenoyloxy)-octadecanoate + H2O = 13-hydroxy-octadecanoate + (9Z)-hexadecenoate + H(+). The catalysed reaction is 9-octadecanoyloxy-octadecanoate + H2O = 9-hydroxy-octadecanoate + octadecanoate + H(+). It catalyses the reaction 12-octadecanoyloxy-octadecanoate + H2O = 12-hydroxyoctadecanoate + octadecanoate + H(+). The enzyme catalyses 13-octadecanoyloxy-octadecanoate + H2O = 13-hydroxy-octadecanoate + octadecanoate + H(+). It carries out the reaction 9-(9Z-octadecenoyloxy)-octadecanoate + H2O = 9-hydroxy-octadecanoate + (9Z)-octadecenoate + H(+). The catalysed reaction is 12-(9Z-octadecenoyloxy)-octadecanoate + H2O = 12-hydroxyoctadecanoate + (9Z)-octadecenoate + H(+). It catalyses the reaction 13-(9Z-octadecenoyloxy)-octadecanoate + H2O = 13-hydroxy-octadecanoate + (9Z)-octadecenoate + H(+). The enzyme catalyses 5-(9Z-octadecenoyloxy)-octadecanoate + H2O = 5-hydroxy-octadecanoate + (9Z)-octadecenoate + H(+). Its activity is regulated as follows. Inhibited by N-hydroxyhydantoin carbamate JJH260 and beta-lactone KC01. Functionally, hydrolyzes bioactive fatty-acid esters of hydroxy-fatty acids (FAHFAs), but not other major classes of lipids. Show a preference for FAHFAs with branching distal from the carboxylate head group of the lipids. Regulates the expression and the cell-associated anticoagulant activity of the inhibitor TFPI in endothelial cells (in vitro). The chain is Androgen-dependent TFPI-regulating protein (ADTRP) from Homo sapiens (Human).